Reading from the N-terminus, the 548-residue chain is MFS-type transporter TOXA (548 aa).

Positions 1 to 12 (MDEQIVSASSNV) are enriched in polar residues. The interval 1-33 (MDEQIVSASSNVKDGVEKQPVKDREDVDANVVP) is disordered. Over residues 14 to 27 (DGVEKQPVKDREDV) the composition is skewed to basic and acidic residues. Helical transmembrane passes span 43-63 (ISLISLFSIVMSLGAAAFLGA), 85-105 (AVAWYGAIYLLMSGTTQPLFG), 114-134 (KWLFITCLIVLQLGSLVCALA), 146-166 (VAGIGAGGILSGALNIVALIV), 177-197 (MIGALECVALIIGPIIGGAIA), 204-224 (WCFWINLPIGAAVCAILLFFF), 250-270 (IGAGMIISSLVCLSLALQWGG), 280-300 (VVALLVVFGVLFLSASGHQYW), 316-336 (GFLLSLFNGLCFGGVQYAALY), 357-377 (MLPIVGAIIGVNIVAGITISF), 382-402 (APFIVIATVLASVGSGLLYTF), 411-431 (IIGYQLIYGAGSGAGVQQAFI), 444-464 (YASASVLLMNSMSGVITLCVC), and 518-538 (FLVAIVLSCASVLGWPFLSWA).

Belongs to the major facilitator superfamily. TCR/Tet family.

It is found in the membrane. MFS-type transporter; part of the diffuse TOX2 gene cluster that mediates the biosynthesis of the HC-toxin, cyclic tetrapeptide of structure cyclo(D-Pro-L-Ala-D-Ala-L-Aeo), where Aeo stands for 2-amino-9,10-epoxi-8-oxodecanoic acid. HC-toxin is a determinant of specificity and virulence in the interaction between the producing fungus and its host, maize. TOXA acts as a HC-toxin efflux pump which contributes to self-protection against HC-toxin and/or the secretion of HC-toxin into the extracellular milieu. In Cochliobolus carbonum (Maize leaf spot fungus), this protein is MFS-type transporter TOXA.